The sequence spans 845 residues: Translation initiation factor IF-2 (845 aa).

Disordered regions lie at residues 44–91 (KRRK…NLSS) and 119–256 (ARRA…NQEP). Basic and acidic residues predominate over residues 119 to 129 (ARRAKEREESL). Residues 139-148 (DETPQEEEEP) are compositionally biased toward acidic residues. Polar residues predominate over residues 156–165 (SLSPAQSQIE). 2 stretches are compositionally biased toward basic and acidic residues: residues 179 to 194 (IEKRKADETKEDDRNS) and 202 to 217 (SEVRAPKVLKGADEKR). In terms of domain architecture, tr-type G spans 343–510 (LRPPVVTIMG…AILLQAEILD (168 aa)). Residues 352–359 (GHVDHGKT) are G1. 352–359 (GHVDHGKT) provides a ligand contact to GTP. Residues 377 to 381 (GITQH) are G2. The segment at 398 to 401 (DTPG) is G3. GTP-binding positions include 398-402 (DTPGH) and 452-455 (NKID). The tract at residues 452-455 (NKID) is G4. The G5 stretch occupies residues 488–490 (SAK).

It belongs to the TRAFAC class translation factor GTPase superfamily. Classic translation factor GTPase family. IF-2 subfamily.

The protein resides in the cytoplasm. In terms of biological role, one of the essential components for the initiation of protein synthesis. Protects formylmethionyl-tRNA from spontaneous hydrolysis and promotes its binding to the 30S ribosomal subunits. Also involved in the hydrolysis of GTP during the formation of the 70S ribosomal complex. The polypeptide is Translation initiation factor IF-2 (Bartonella henselae (strain ATCC 49882 / DSM 28221 / CCUG 30454 / Houston 1) (Rochalimaea henselae)).